A 128-amino-acid chain; its full sequence is B2 protein (128 aa).

A signal peptide spans 1 to 10 (SLILLVAVQA). Intrachain disulfides connect Cys-26–Cys-57 and Cys-97–Cys-114.

It belongs to the PBP/GOBP family. In terms of processing, N-glycosylated. In terms of tissue distribution, tubular accessory sex gland.

It is found in the secreted. May be a carrier protein for lipids. The chain is B2 protein from Tenebrio molitor (Yellow mealworm beetle).